The primary structure comprises 215 residues: GTP-binding protein YPT6 (215 aa).

17–24 (GEQGVGKT) is a GTP binding site. The Effector region signature appears at 39 to 47 (YQATIGIDF). GTP-binding positions include 65-69 (DTAGQ) and 124-127 (NKSD). The span at 178–196 (NSESTPLDSENANSANQNK) shows a compositional bias: polar residues. The disordered stretch occupies residues 178–215 (NSESTPLDSENANSANQNKPGVIDISTAEEQEQSACQC). S-geranylgeranyl cysteine attachment occurs at residues Cys-213 and Cys-215. Position 215 is a cysteine methyl ester (Cys-215).

The protein belongs to the small GTPase superfamily. Rab family. In terms of assembly, interacts with YIF1, YIP3 and YIP4.

The protein localises to the cell membrane. Functionally, protein transport. Might participate in post-Golgi transport. The protein is GTP-binding protein YPT6 (YPT6) of Saccharomyces cerevisiae (strain ATCC 204508 / S288c) (Baker's yeast).